A 348-amino-acid polypeptide reads, in one-letter code: Holliday junction branch migration complex subunit RuvB (348 aa).

The tract at residues 1 to 182 is large ATPase domain (RuvB-L); it reads MRIELLNTPA…FGINSRFDYY (182 aa). ATP contacts are provided by residues Ile-21, Arg-22, Gly-63, Lys-66, Thr-67, Thr-68, 129 to 131, Arg-172, Tyr-182, and Arg-219; that span reads EDF. A Mg(2+)-binding site is contributed by Thr-67. The interval 183 to 253 is small ATPAse domain (RuvB-S); that stretch reads SADLLEKIII…IAMTTLDCLE (71 aa). Residues 256–348 are head domain (RuvB-H); it reads EEGLDDMDKK…EFPLEDDQRQ (93 aa). The DNA site is built by Arg-311 and Arg-316.

It belongs to the RuvB family. Homohexamer. Forms an RuvA(8)-RuvB(12)-Holliday junction (HJ) complex. HJ DNA is sandwiched between 2 RuvA tetramers; dsDNA enters through RuvA and exits via RuvB. An RuvB hexamer assembles on each DNA strand where it exits the tetramer. Each RuvB hexamer is contacted by two RuvA subunits (via domain III) on 2 adjacent RuvB subunits; this complex drives branch migration. In the full resolvosome a probable DNA-RuvA(4)-RuvB(12)-RuvC(2) complex forms which resolves the HJ.

The protein localises to the cytoplasm. It carries out the reaction ATP + H2O = ADP + phosphate + H(+). Its function is as follows. The RuvA-RuvB-RuvC complex processes Holliday junction (HJ) DNA during genetic recombination and DNA repair, while the RuvA-RuvB complex plays an important role in the rescue of blocked DNA replication forks via replication fork reversal (RFR). RuvA specifically binds to HJ cruciform DNA, conferring on it an open structure. The RuvB hexamer acts as an ATP-dependent pump, pulling dsDNA into and through the RuvAB complex. RuvB forms 2 homohexamers on either side of HJ DNA bound by 1 or 2 RuvA tetramers; 4 subunits per hexamer contact DNA at a time. Coordinated motions by a converter formed by DNA-disengaged RuvB subunits stimulates ATP hydrolysis and nucleotide exchange. Immobilization of the converter enables RuvB to convert the ATP-contained energy into a lever motion, pulling 2 nucleotides of DNA out of the RuvA tetramer per ATP hydrolyzed, thus driving DNA branch migration. The RuvB motors rotate together with the DNA substrate, which together with the progressing nucleotide cycle form the mechanistic basis for DNA recombination by continuous HJ branch migration. Branch migration allows RuvC to scan DNA until it finds its consensus sequence, where it cleaves and resolves cruciform DNA. The protein is Holliday junction branch migration complex subunit RuvB of Chlorobium limicola (strain DSM 245 / NBRC 103803 / 6330).